Here is a 168-residue protein sequence, read N- to C-terminus: Large ribosomal subunit protein uL10 (168 aa).

Belongs to the universal ribosomal protein uL10 family. Part of the ribosomal stalk of the 50S ribosomal subunit. The N-terminus interacts with L11 and the large rRNA to form the base of the stalk. The C-terminus forms an elongated spine to which L12 dimers bind in a sequential fashion forming a multimeric L10(L12)X complex.

Forms part of the ribosomal stalk, playing a central role in the interaction of the ribosome with GTP-bound translation factors. The sequence is that of Large ribosomal subunit protein uL10 from Levilactobacillus brevis (strain ATCC 367 / BCRC 12310 / CIP 105137 / JCM 1170 / LMG 11437 / NCIMB 947 / NCTC 947) (Lactobacillus brevis).